A 359-amino-acid polypeptide reads, in one-letter code: Ribosomal RNA small subunit methyltransferase mra1 (359 aa).

The segment covering 1–10 has biased composition (basic residues); sequence MPTYSKRKSR. Disordered stretches follow at residues 1–62 and 98–118; these read MPTY…EDEE and VKSD…VKAR. Phosphoserine is present on serine 12. Over residues 18 to 39 the composition is skewed to polar residues; that stretch reads KTNQPKFIKRSQSSETITSGET. Phosphothreonine is present on threonine 33. Serine 100 is modified (phosphoserine). Residues leucine 287, glycine 314, 319–321, and 334–339 each bind S-adenosyl-L-methionine; these read GPD and ISDYPL.

The protein belongs to the class IV-like SAM-binding methyltransferase superfamily. RNA methyltransferase NEP1 family. As to quaternary structure, homodimer.

The protein resides in the nucleus. It is found in the nucleolus. The catalysed reaction is a pseudouridine in rRNA + S-adenosyl-L-methionine = an N(1)-methylpseudouridine in rRNA + S-adenosyl-L-homocysteine + H(+). In terms of biological role, S-adenosyl-L-methionine-dependent pseudouridine N(1)-methyltransferase that methylates the pseudouridine corresponding to position 1189 (Psi1189) in S.cerevisiae 18S rRNA. Involved the biosynthesis of the hypermodified N1-methyl-N3-(3-amino-3-carboxypropyl) pseudouridine (m1acp3-Psi) conserved in eukaryotic 18S rRNA. Also has an essential role in 40S ribosomal subunit biogenesis independent on its methyltransferase activity, facilitating the incorporation of ribosomal protein S19 during the formation of pre-ribosomes. Essential for cell growth. It also has a key role in promoting the mating function. This chain is Ribosomal RNA small subunit methyltransferase mra1, found in Schizosaccharomyces pombe (strain 972 / ATCC 24843) (Fission yeast).